Here is a 353-residue protein sequence, read N- to C-terminus: DNA-repair protein XRCC1 (353 aa).

The segment covering 1–12 (MSQKRNLPSWMS) has biased composition (polar residues). The tract at residues 1-57 (MSQKRNLPSWMSSRDPEITPSKSHCKKPKDEGPTEEHNSRNAPSNKSEHAEPSSNTT) is disordered. The segment covering 28–39 (PKDEGPTEEHNS) has biased composition (basic and acidic residues). The BRCT 1 domain maps to 58–146 (EFSKLMEGVV…KLVDIEQYLM (89 aa)). The segment at 150–194 (KPWRKSSSPQDANREKREHLSKKPEKQVEKKTETRGTPSTSSKNR) is disordered. Basic and acidic residues predominate over residues 161–183 (ANREKREHLSKKPEKQVEKKTET). Residues 184 to 194 (RGTPSTSSKNR) are compositionally biased toward polar residues. The stretch at 240-260 (AAEGVLTCLQDAIDSLEQKQD) forms a coiled coil. A BRCT 2 domain is found at 266-347 (ELWSFVPRVV…EEEIELAYRN (82 aa)).

As to quaternary structure, homodimer. Interacts with polynucleotide kinase (PNK), DNA polymerase-beta (POLB) and DNA ligase III (LIG3). Interacts with ZDP and ROS1. Binds to various forms of double-stranded DNA (e.g. methylated, unmethylated, with single-nucleotide gap flanked by 3'-phosphate or 5'-phosphate ends).

Its subcellular location is the nucleus. Functionally, corrects defective DNA strand-break repair and sister chromatid exchange following treatment with ionizing radiation and alkylating agents. Involved in DNA demethylation pathway by stimulating cytosine methylation (5-meC) excision, gap tailoring, and DNA ligation. This is DNA-repair protein XRCC1 from Arabidopsis thaliana (Mouse-ear cress).